The following is a 360-amino-acid chain: MDKLFDRLQMLEDRYEELGELLSDPDVISDTKRFTKLSKEMADLRETVEKYNKYKEVTQQISDDEEMLSDGLDDEMASLVKEELSNAKNEKVKLEEEIKILLLPKDPNDDKNIIMEIRGAAGGDEASLFAADLFSMYSKYAERQGWSIEVIDKNVTEVGGFKEIALIINGNSVWSKLKYESGAHRVQRIPVTESAGRVHTSTATVVVMPEEEDVEIELDPKDIRVDVYRSSGAGGQHINKTSSAVRMTHLPTGIVVAMQDQRSQQQNREKAMKILKARVYDYYAQQEQSEYDANRKSAVGTGDRSERIRTYNYPQNRVTDHRIGLSLNKLDRIMNGELEDVIDALVLFEQTKAMEKLENE.

Glutamine 236 is subject to N5-methylglutamine.

This sequence belongs to the prokaryotic/mitochondrial release factor family. In terms of processing, methylated by PrmC. Methylation increases the termination efficiency of RF1.

The protein resides in the cytoplasm. Its function is as follows. Peptide chain release factor 1 directs the termination of translation in response to the peptide chain termination codons UAG and UAA. The protein is Peptide chain release factor 1 of Ligilactobacillus salivarius (strain UCC118) (Lactobacillus salivarius).